The following is a 359-amino-acid chain: Probable D-xylulose reductase A (359 aa).

The Zn(2+) site is built by Cys47, His72, and Glu73. 182 to 187 (GAGPVG) contacts NAD(+).

It belongs to the zinc-containing alcohol dehydrogenase family. It depends on Zn(2+) as a cofactor.

It carries out the reaction xylitol + NAD(+) = D-xylulose + NADH + H(+). Its pathway is carbohydrate degradation; L-arabinose degradation via L-arabinitol; D-xylulose 5-phosphate from L-arabinose (fungal route): step 4/5. Xylitol dehydrogenase which catalyzes the conversion of xylitol to D-xylulose. Xylose is a major component of hemicelluloses such as xylan. Most fungi utilize D-xylose via three enzymatic reactions, xylose reductase (XR), xylitol dehydrogenase (XDH), and xylulokinase, to form xylulose 5-phosphate, which enters pentose phosphate pathway. This chain is Probable D-xylulose reductase A (xdhA), found in Emericella nidulans (strain FGSC A4 / ATCC 38163 / CBS 112.46 / NRRL 194 / M139) (Aspergillus nidulans).